The chain runs to 642 residues: MPVITLPDGSQRHYDHAVSPLDVALDIGPGLAKACIAGRVNGELVDASDKIDTDAQLAIITAKDEAGLEIIRHSCAHLLGHAIKQLWPDTKMAIGPVIDNGFYYDVDIDRTLTQEDIELLEKRMHELADTDYDVIKKKVSWQEARDAFAARGETYKMAILDENISRDDRPGLYHHEEYIDMCRGPHVPNMRFCHHFKLQKTSGAYWRGDSKNKMLQRIYGTAWADKKQLASYLQRLEEAAKRDHRKIGKQLDLYHMQEEAPGMVFWHNDGWTIFRELEAFVRMKLKSYQYQEVKGPFMMDRVMWEKTGHWENYKEAMFTTSSENREYCIKPMNCPGHVQIFNQGLKSYRDLPLRMAEFGSCHRNEPSGSLHGLMRVRGFTQDDAHIFCTEEQVRDEVNSCIKMVYDMYSTFGFEKIVVKLSTRPEKRIGSDEMWDRAEADLAAALTENNIEFDYQPGEGAFYGPKIEFTLHDCLDRAWQCGTVQLDFSLPGRLNASYVGESNERQVPVMIHRAILGSMERFIGILTEEFAGFFPTWLAPVQVVIMNITDTQSDYVNELTRKLQEAGIRVKADLRNEKIGFKIREHTLRRVPYMLVCGDKEVEAGKVAVRTRRGKDLGSLDVSEVISKLQQEIRSRSLHQLEE.

Residues 1-61 enclose the TGS domain; the sequence is MPVITLPDGS…DTDAQLAIIT (61 aa). A catalytic region spans residues 243-534; it reads DHRKIGKQLD…LTEEFAGFFP (292 aa). Cys334, His385, and His511 together coordinate Zn(2+).

It belongs to the class-II aminoacyl-tRNA synthetase family. As to quaternary structure, homodimer. The cofactor is Zn(2+).

The protein resides in the cytoplasm. It carries out the reaction tRNA(Thr) + L-threonine + ATP = L-threonyl-tRNA(Thr) + AMP + diphosphate + H(+). Its function is as follows. Catalyzes the attachment of threonine to tRNA(Thr) in a two-step reaction: L-threonine is first activated by ATP to form Thr-AMP and then transferred to the acceptor end of tRNA(Thr). Also edits incorrectly charged L-seryl-tRNA(Thr). The polypeptide is Threonine--tRNA ligase (Pectobacterium carotovorum subsp. carotovorum (strain PC1)).